The primary structure comprises 131 residues: Small ribosomal subunit protein uS8 (131 aa).

Belongs to the universal ribosomal protein uS8 family. In terms of assembly, part of the 30S ribosomal subunit. Contacts proteins S5 and S12.

Its function is as follows. One of the primary rRNA binding proteins, it binds directly to 16S rRNA central domain where it helps coordinate assembly of the platform of the 30S subunit. This Mesomycoplasma hyopneumoniae (strain 7448) (Mycoplasma hyopneumoniae) protein is Small ribosomal subunit protein uS8.